We begin with the raw amino-acid sequence, 738 residues long: uncharacterized protein (738 aa).

Polar residues-rich tracts occupy residues 1–34, 140–169, and 177–197; these read MSSS…QVSS, TSSD…QSPP, and KPFS…STKD. Disordered stretches follow at residues 1–51 and 140–197; these read MSSS…AASI and TSSD…STKD. The RRM domain maps to 363 to 434; it reads SRLFLGHLNT…QKLHLEISKI (72 aa). The segment at 466 to 487 is disordered; that stretch reads YPTSSRKRTRSPLMSKGKSYDR.

This is an uncharacterized protein from Schizosaccharomyces pombe (strain 972 / ATCC 24843) (Fission yeast).